The following is a 310-amino-acid chain: Ribosomal protein L11 methyltransferase (310 aa).

Residues threonine 156, glycine 179, aspartate 201, and asparagine 246 each coordinate S-adenosyl-L-methionine.

This sequence belongs to the methyltransferase superfamily. PrmA family.

It is found in the cytoplasm. The catalysed reaction is L-lysyl-[protein] + 3 S-adenosyl-L-methionine = N(6),N(6),N(6)-trimethyl-L-lysyl-[protein] + 3 S-adenosyl-L-homocysteine + 3 H(+). Its function is as follows. Methylates ribosomal protein L11. The polypeptide is Ribosomal protein L11 methyltransferase (Desulfatibacillum aliphaticivorans).